Consider the following 44-residue polypeptide: Alpha-amylase inhibitor helianthamide (44 aa).

3 cysteine pairs are disulfide-bonded: Cys6/Cys38, Cys16/Cys33, and Cys20/Cys39. The tract at residues 7–10 (YIYH) is inhibitory motif.

It belongs to the sea anemone alpha-amylase inhibitor family.

The protein resides in the secreted. Functionally, specific pancreatic alpha-amylase (AMY2A) inhibitor. The recombinant peptide inhibits human pancreatic (Ki=0.01 nM) and porcine pancreatic alpha-amylases (Ki=0.1 nM). This is Alpha-amylase inhibitor helianthamide from Stichodactyla helianthus (Sun anemone).